A 159-amino-acid polypeptide reads, in one-letter code: Ribosomal RNA large subunit methyltransferase H (159 aa).

Residues leucine 76, glycine 108, and 127 to 132 (FGLLTL) contribute to the S-adenosyl-L-methionine site.

The protein belongs to the RNA methyltransferase RlmH family. Homodimer.

The protein localises to the cytoplasm. It carries out the reaction pseudouridine(1915) in 23S rRNA + S-adenosyl-L-methionine = N(3)-methylpseudouridine(1915) in 23S rRNA + S-adenosyl-L-homocysteine + H(+). Functionally, specifically methylates the pseudouridine at position 1915 (m3Psi1915) in 23S rRNA. The sequence is that of Ribosomal RNA large subunit methyltransferase H from Streptococcus pyogenes serotype M12 (strain MGAS2096).